A 373-amino-acid polypeptide reads, in one-letter code: Opsin Rh1 (373 aa).

Topologically, residues 1-54 (MDSFAAVATQLGPHFAALSNGSVVDKVTPDMAHLISPYWNQFPAMDPIWAKILT) are extracellular. The N-linked (GlcNAc...) asparagine glycan is linked to asparagine 20. The chain crosses the membrane as a helical span at residues 55–75 (AYMIIIGMISWCGNGVVIYIF). The Cytoplasmic portion of the chain corresponds to 76–86 (ATTKSLRTPAN). Residues 87 to 107 (LLVINLAISDFGIMITNTPMM) traverse the membrane as a helical segment. At 108–124 (GINLYFETWVLGPMMCD) the chain is on the extracellular side. A disulfide bridge links cysteine 123 with cysteine 200. A helical membrane pass occupies residues 125-145 (IYAGLGSAFGCSSIWSMCMIS). The Cytoplasmic portion of the chain corresponds to 146 to 162 (LDRYQVIVKGMAGRPMT). Residues 163–183 (IPLALGKIAYIWFMSSIWCLA) form a helical membrane-spanning segment. Over 184-219 (PVFGWSRYVPEGNLTSCGIDYLERDWNPRSYLIFYS) the chain is Extracellular. Asparagine 196 carries an N-linked (GlcNAc...) asparagine glycan. A helical transmembrane segment spans residues 220–240 (IFVYYIPLFLICYSYWFIIAA). The Cytoplasmic segment spans residues 241-276 (VSAHEKAMREQAKKMNVKSLRSSEDADKSAEGKLAK). Residues 277–297 (VALVTISLWFMAWTPYLVINC) form a helical membrane-spanning segment. Residues 298 to 308 (MGLFKFEGLTP) are Extracellular-facing. A helical membrane pass occupies residues 309–331 (LNTIWGACFAKSAACYNPIVYGI). Position 319 is an N6-(retinylidene)lysine (lysine 319). Over 332–373 (SHPKYRLALKEKCPCCVFGKVDDGKSSEAQSQATNSEAESKA) the chain is Cytoplasmic. Positions 354–373 (DGKSSEAQSQATNSEAESKA) are disordered. Polar residues predominate over residues 358-373 (SEAQSQATNSEAESKA).

The protein belongs to the G-protein coupled receptor 1 family. Opsin subfamily. In terms of processing, phosphorylated on some or all of the serine and threonine residues present in the C-terminal region.

The protein localises to the cell projection. It localises to the rhabdomere membrane. Visual pigments are the light-absorbing molecules that mediate vision. They consist of an apoprotein, opsin, covalently linked to cis-retinal. This is Opsin Rh1 (ninaE) from Drosophila pseudoobscura pseudoobscura (Fruit fly).